Here is a 354-residue protein sequence, read N- to C-terminus: Uroporphyrinogen decarboxylase (354 aa).

Substrate contacts are provided by residues 27–31 (RQAGR), aspartate 77, tyrosine 153, threonine 208, and histidine 326.

Belongs to the uroporphyrinogen decarboxylase family. Homodimer.

Its subcellular location is the cytoplasm. It carries out the reaction uroporphyrinogen III + 4 H(+) = coproporphyrinogen III + 4 CO2. Its pathway is porphyrin-containing compound metabolism; protoporphyrin-IX biosynthesis; coproporphyrinogen-III from 5-aminolevulinate: step 4/4. In terms of biological role, catalyzes the decarboxylation of four acetate groups of uroporphyrinogen-III to yield coproporphyrinogen-III. This is Uroporphyrinogen decarboxylase from Neisseria gonorrhoeae (strain ATCC 700825 / FA 1090).